The primary structure comprises 272 residues: Acyl-[acyl-carrier-protein]--UDP-N-acetylglucosamine O-acyltransferase (272 aa).

The protein belongs to the transferase hexapeptide repeat family. LpxA subfamily. As to quaternary structure, homotrimer.

Its subcellular location is the cytoplasm. It carries out the reaction a (3R)-hydroxyacyl-[ACP] + UDP-N-acetyl-alpha-D-glucosamine = a UDP-3-O-[(3R)-3-hydroxyacyl]-N-acetyl-alpha-D-glucosamine + holo-[ACP]. It functions in the pathway glycolipid biosynthesis; lipid IV(A) biosynthesis; lipid IV(A) from (3R)-3-hydroxytetradecanoyl-[acyl-carrier-protein] and UDP-N-acetyl-alpha-D-glucosamine: step 1/6. Involved in the biosynthesis of lipid A, a phosphorylated glycolipid that anchors the lipopolysaccharide to the outer membrane of the cell. This is Acyl-[acyl-carrier-protein]--UDP-N-acetylglucosamine O-acyltransferase from Methylobacterium radiotolerans (strain ATCC 27329 / DSM 1819 / JCM 2831 / NBRC 15690 / NCIMB 10815 / 0-1).